The sequence spans 235 residues: Motile sperm domain-containing protein 3 (235 aa).

2 disordered regions span residues 1–30 (MRRG…PSGP) and 143–170 (ELQG…PFPE). The 113-residue stretch at 33–145 (PVLVFPPDLV…RAPAYPLELQ (113 aa)) folds into the MSP domain. 2 helical membrane-spanning segments follow: residues 180 to 200 (SFLL…LPLQ) and 213 to 233 (VSLG…MVFL).

Its subcellular location is the membrane. The sequence is that of Motile sperm domain-containing protein 3 (MOSPD3) from Bos taurus (Bovine).